A 169-amino-acid chain; its full sequence is ATP synthase subunit b (169 aa).

The chain crosses the membrane as a helical span at residues 11–31 (KLPLGNMLFIIISFLVLMVIL).

It belongs to the ATPase B chain family. In terms of assembly, F-type ATPases have 2 components, F(1) - the catalytic core - and F(0) - the membrane proton channel. F(1) has five subunits: alpha(3), beta(3), gamma(1), delta(1), epsilon(1). F(0) has three main subunits: a(1), b(2) and c(10-14). The alpha and beta chains form an alternating ring which encloses part of the gamma chain. F(1) is attached to F(0) by a central stalk formed by the gamma and epsilon chains, while a peripheral stalk is formed by the delta and b chains.

It localises to the cell membrane. F(1)F(0) ATP synthase produces ATP from ADP in the presence of a proton or sodium gradient. F-type ATPases consist of two structural domains, F(1) containing the extramembraneous catalytic core and F(0) containing the membrane proton channel, linked together by a central stalk and a peripheral stalk. During catalysis, ATP synthesis in the catalytic domain of F(1) is coupled via a rotary mechanism of the central stalk subunits to proton translocation. In terms of biological role, component of the F(0) channel, it forms part of the peripheral stalk, linking F(1) to F(0). In Leuconostoc citreum (strain KM20), this protein is ATP synthase subunit b.